A 364-amino-acid polypeptide reads, in one-letter code: Phenylalanine dehydrogenase (364 aa).

Arginine 62 lines the NAD(+) pocket. An L-phenylalanine-binding site is contributed by lysine 86. Residue lysine 98 is the Proton donor/acceptor of the active site. NAD(+) is bound by residues aspartate 133, serine 164, threonine 168, 255–256, and 276–278; these read AM and AAN. Residue asparagine 278 coordinates L-phenylalanine.

Belongs to the Glu/Leu/Phe/Val dehydrogenases family.

It catalyses the reaction L-phenylalanine + NAD(+) + H2O = 3-phenylpyruvate + NH4(+) + NADH + H(+). It functions in the pathway amino-acid biosynthesis; L-phenylalanine biosynthesis; L-phenylalanine from phenylpyruvate (PDH route): step 1/1. Catalyzes the reversible NAD(+)-dependent oxidative deamination of L-phenylalanine to phenylpyruvate. This is Phenylalanine dehydrogenase from Rhodococcus jostii (strain RHA1).